Reading from the N-terminus, the 498-residue chain is Flagellin (498 aa).

Belongs to the bacterial flagellin family.

Its subcellular location is the secreted. It localises to the bacterial flagellum. Functionally, flagellin is the subunit protein which polymerizes to form the filaments of bacterial flagella. The chain is Flagellin (fliC) from Escherichia coli (strain K12).